Reading from the N-terminus, the 209-residue chain is Uracil phosphoribosyltransferase (209 aa).

5-phospho-alpha-D-ribose 1-diphosphate-binding positions include Arg79, Arg104, and 131-139 (DPMLATGGS). Uracil-binding positions include Ile194 and 199–201 (GDA). A 5-phospho-alpha-D-ribose 1-diphosphate-binding site is contributed by Asp200.

Belongs to the UPRTase family. Requires Mg(2+) as cofactor.

It catalyses the reaction UMP + diphosphate = 5-phospho-alpha-D-ribose 1-diphosphate + uracil. The protein operates within pyrimidine metabolism; UMP biosynthesis via salvage pathway; UMP from uracil: step 1/1. With respect to regulation, allosterically activated by GTP. Catalyzes the conversion of uracil and 5-phospho-alpha-D-ribose 1-diphosphate (PRPP) to UMP and diphosphate. This is Uracil phosphoribosyltransferase from Streptococcus uberis (strain ATCC BAA-854 / 0140J).